The sequence spans 384 residues: Lipoyl synthase 2, chloroplastic (384 aa).

A chloroplast-targeting transit peptide spans 1–48 (MAAYCSRVYHHHPVSPSTMQGSLARPSIHAGSASLTFRARPNSVSIVR). Positions 108, 113, 119, 145, 149, 152, and 360 each coordinate [4Fe-4S] cluster. Residues 128-349 (GDGDGIATAT…KEYGESLGFL (222 aa)) form the Radical SAM core domain.

The protein belongs to the radical SAM superfamily. Lipoyl synthase family. [4Fe-4S] cluster serves as cofactor.

The protein resides in the plastid. It is found in the chloroplast. It carries out the reaction [[Fe-S] cluster scaffold protein carrying a second [4Fe-4S](2+) cluster] + N(6)-octanoyl-L-lysyl-[protein] + 2 oxidized [2Fe-2S]-[ferredoxin] + 2 S-adenosyl-L-methionine + 4 H(+) = [[Fe-S] cluster scaffold protein] + N(6)-[(R)-dihydrolipoyl]-L-lysyl-[protein] + 4 Fe(3+) + 2 hydrogen sulfide + 2 5'-deoxyadenosine + 2 L-methionine + 2 reduced [2Fe-2S]-[ferredoxin]. Its pathway is protein modification; protein lipoylation via endogenous pathway; protein N(6)-(lipoyl)lysine from octanoyl-[acyl-carrier-protein]: step 2/2. In terms of biological role, catalyzes the radical-mediated insertion of two sulfur atoms into the C-6 and C-8 positions of the octanoyl moiety bound to the lipoyl domains of lipoate-dependent enzymes, thereby converting the octanoylated domains into lipoylated derivatives. The chain is Lipoyl synthase 2, chloroplastic from Oryza sativa subsp. indica (Rice).